The chain runs to 435 residues: Gamma-glutamyl phosphate reductase (435 aa).

It belongs to the gamma-glutamyl phosphate reductase family.

It is found in the cytoplasm. The catalysed reaction is L-glutamate 5-semialdehyde + phosphate + NADP(+) = L-glutamyl 5-phosphate + NADPH + H(+). It participates in amino-acid biosynthesis; L-proline biosynthesis; L-glutamate 5-semialdehyde from L-glutamate: step 2/2. In terms of biological role, catalyzes the NADPH-dependent reduction of L-glutamate 5-phosphate into L-glutamate 5-semialdehyde and phosphate. The product spontaneously undergoes cyclization to form 1-pyrroline-5-carboxylate. This chain is Gamma-glutamyl phosphate reductase, found in Parasynechococcus marenigrum (strain WH8102).